Here is a 192-residue protein sequence, read N- to C-terminus: Holliday junction branch migration complex subunit RuvA (192 aa).

The interval 1–61 (MFEYLKGIVT…DTGITLYGFL (61 aa)) is domain I. Residues 62 to 137 (SLEDKELFLK…KLGDYVKKST (76 aa)) are domain II. Positions 137–140 (TAAA) are flexible linker. The interval 141–192 (DLTPSLQDALLALVALGYTQKEVDRITPKLAKLPENTADGYVKEALALLLKK) is domain III.

The protein belongs to the RuvA family. As to quaternary structure, homotetramer. Forms an RuvA(8)-RuvB(12)-Holliday junction (HJ) complex. HJ DNA is sandwiched between 2 RuvA tetramers; dsDNA enters through RuvA and exits via RuvB. An RuvB hexamer assembles on each DNA strand where it exits the tetramer. Each RuvB hexamer is contacted by two RuvA subunits (via domain III) on 2 adjacent RuvB subunits; this complex drives branch migration. In the full resolvosome a probable DNA-RuvA(4)-RuvB(12)-RuvC(2) complex forms which resolves the HJ.

It is found in the cytoplasm. Its function is as follows. The RuvA-RuvB-RuvC complex processes Holliday junction (HJ) DNA during genetic recombination and DNA repair, while the RuvA-RuvB complex plays an important role in the rescue of blocked DNA replication forks via replication fork reversal (RFR). RuvA specifically binds to HJ cruciform DNA, conferring on it an open structure. The RuvB hexamer acts as an ATP-dependent pump, pulling dsDNA into and through the RuvAB complex. HJ branch migration allows RuvC to scan DNA until it finds its consensus sequence, where it cleaves and resolves the cruciform DNA. The polypeptide is Holliday junction branch migration complex subunit RuvA (Lactobacillus johnsonii (strain CNCM I-12250 / La1 / NCC 533)).